We begin with the raw amino-acid sequence, 347 residues long: Glucose 1-dehydrogenase (347 aa).

Residue Cys39 coordinates Zn(2+). Residue Thr41 participates in substrate binding. Positions 64 and 65 each coordinate Zn(2+). Residues Glu110 and Glu146 each coordinate substrate. Residue Glu146 coordinates Zn(2+). NADP(+) is bound by residues 178–181 (AGPV), 260–262 (LGV), and 289–291 (SVN). Asn291 contributes to the substrate binding site.

It belongs to the zinc-containing alcohol dehydrogenase family. Glucose 1-dehydrogenase subfamily. In terms of assembly, homodimer. Zn(2+) serves as cofactor.

It catalyses the reaction D-glucose + NAD(+) = D-glucono-1,5-lactone + NADH + H(+). It carries out the reaction D-glucose + NADP(+) = D-glucono-1,5-lactone + NADPH + H(+). In terms of biological role, catalyzes the NAD(P)(+)-dependent oxidation of D-glucose to D-gluconate via gluconolactone. To a lesser extent, is also active with xylose as substrate, but mannose, arabinose, galactose, fructose 6-phosphate, glucose 6-phosphate, glycerinaldehyde 3-phosphate, ribose, sorbitol, ethanol, erythritol, or lactose are not oxidized by the enzyme. Can utilize both NAD(+) and NADP(+) as electron acceptor, with a marked preference for NADP(+). Is involved in the degradation of glucose through a non-phosphorylative variant of the Entner-Doudoroff pathway. This is Glucose 1-dehydrogenase (gdh) from Thermoproteus tenax (strain ATCC 35583 / DSM 2078 / JCM 9277 / NBRC 100435 / Kra 1).